Here is a 486-residue protein sequence, read N- to C-terminus: Betaine aldehyde dehydrogenase (486 aa).

T23 and D90 together coordinate K(+). 147–149 contacts NAD(+); the sequence is GAW. K159 (charge relay system) is an active-site residue. NAD(+) contacts are provided by residues 173–176 and 226–229; these read KPSE and ESGT. L241 provides a ligand contact to K(+). E247 (proton acceptor) is an active-site residue. 3 residues coordinate NAD(+): G249, C281, and E382. Catalysis depends on C281, which acts as the Nucleophile. C281 is modified (cysteine sulfenic acid (-SOH)). K(+)-binding residues include K452 and G455. Catalysis depends on E459, which acts as the Charge relay system.

This sequence belongs to the aldehyde dehydrogenase family. Dimer of dimers. K(+) serves as cofactor.

The enzyme catalyses betaine aldehyde + NAD(+) + H2O = glycine betaine + NADH + 2 H(+). The protein operates within amine and polyamine biosynthesis; betaine biosynthesis via choline pathway; betaine from betaine aldehyde: step 1/1. In terms of biological role, involved in the biosynthesis of the osmoprotectant glycine betaine. Catalyzes the irreversible oxidation of betaine aldehyde to the corresponding acid. This is Betaine aldehyde dehydrogenase from Vibrio parahaemolyticus serotype O3:K6 (strain RIMD 2210633).